The following is a 904-amino-acid chain: Thiamine diphosphate dependent-3-acetyloctanal synthase PigD (904 aa).

The interval R879–S904 is disordered. A compositionally biased stretch (polar residues) spans Q886–S904.

The protein belongs to the TPP enzyme family. The cofactor is thiamine diphosphate.

The enzyme catalyses (2E)-octenal + pyruvate + H(+) = (S)-3-acetyloctanal + CO2. It functions in the pathway antibiotic biosynthesis; prodigiosin biosynthesis. In terms of biological role, involved in the biosynthesis of 2-methyl-3-n-amyl-pyrrole (MAP), one of the terminal products involved in the biosynthesis of the red antibiotic prodigiosin (Pig). Catalyzes the decarboxylation of pyruvate, followed by the modification of the resulting two-carbon fragment acetaldehyde at the C3 position of the 2-octenal (1,2-addition of acetaldehyde) giving 3-acetyloctanal. In vitro, it can act on a number of alpha,beta-unsaturated carbonyl compounds, including aldehydes and ketones, and can catalyze both 1,2-addition and Stetter-type 1,4-addition depending on the substrate. This Serratia marcescens protein is Thiamine diphosphate dependent-3-acetyloctanal synthase PigD.